We begin with the raw amino-acid sequence, 125 residues long: Hydrogenase maturation factor HypA (125 aa).

Position 2 (His-2) interacts with Ni(2+). Zn(2+)-binding residues include Cys-73, Cys-76, Cys-96, and Cys-99.

This sequence belongs to the HypA/HybF family.

Involved in the maturation of [NiFe] hydrogenases. Required for nickel insertion into the metal center of the hydrogenase. This chain is Hydrogenase maturation factor HypA, found in Methanobrevibacter smithii (strain ATCC 35061 / DSM 861 / OCM 144 / PS).